Consider the following 178-residue polypeptide: CDP-diacylglycerol--glycerol-3-phosphate 3-phosphatidyltransferase (178 aa).

A run of 4 helical transmembrane segments spans residues 28-48, 88-108, 125-145, and 147-167; these read LSSL…GFFA, LIFF…IFLI, LFVS…VNFL, and ILTN…WVDY.

This sequence belongs to the CDP-alcohol phosphatidyltransferase class-I family.

It is found in the cell membrane. It carries out the reaction a CDP-1,2-diacyl-sn-glycerol + sn-glycerol 3-phosphate = a 1,2-diacyl-sn-glycero-3-phospho-(1'-sn-glycero-3'-phosphate) + CMP + H(+). Its pathway is phospholipid metabolism; phosphatidylglycerol biosynthesis; phosphatidylglycerol from CDP-diacylglycerol: step 1/2. Functionally, this protein catalyzes the committed step to the synthesis of the acidic phospholipids. The polypeptide is CDP-diacylglycerol--glycerol-3-phosphate 3-phosphatidyltransferase (pgsA) (Aquifex aeolicus (strain VF5)).